The following is a 159-amino-acid chain: UPF0303 protein Ping_1243 (159 aa).

The protein belongs to the UPF0303 family.

This chain is UPF0303 protein Ping_1243, found in Psychromonas ingrahamii (strain DSM 17664 / CCUG 51855 / 37).